Reading from the N-terminus, the 338-residue chain is DNA-directed RNA polymerase subunit alpha (338 aa).

Residues 1-234 (MIHKNWAELI…DQLSIFVNFE (234 aa)) are alpha N-terminal domain (alpha-NTD). The tract at residues 250–338 (FNPLLLKKVD…DLAKRFEDQF (89 aa)) is alpha C-terminal domain (alpha-CTD).

The protein belongs to the RNA polymerase alpha chain family. In terms of assembly, homodimer. The RNAP catalytic core consists of 2 alpha, 1 beta, 1 beta' and 1 omega subunit. When a sigma factor is associated with the core the holoenzyme is formed, which can initiate transcription.

The catalysed reaction is RNA(n) + a ribonucleoside 5'-triphosphate = RNA(n+1) + diphosphate. DNA-dependent RNA polymerase catalyzes the transcription of DNA into RNA using the four ribonucleoside triphosphates as substrates. This is DNA-directed RNA polymerase subunit alpha from Cereibacter sphaeroides (strain ATCC 17025 / ATH 2.4.3) (Rhodobacter sphaeroides).